The primary structure comprises 98 residues: Growth-regulated protein homolog gamma (98 aa).

The N-terminal stretch at 1-29 is a signal peptide; the sequence is MAPAASSAPRLLRAAMLLLLLVAAGRRAA. 2 disulfide bridges follow: Cys-39/Cys-65 and Cys-41/Cys-81.

The protein belongs to the intercrine alpha (chemokine CxC) family.

The protein resides in the secreted. This Bos taurus (Bovine) protein is Growth-regulated protein homolog gamma.